The sequence spans 314 residues: Olfactory receptor 9Q2 (314 aa).

Over 1–25 (MAERNYTVVTEFFLTAFTEHLQWRV) the chain is Extracellular. N-linked (GlcNAc...) asparagine glycosylation is present at Asn-5. A helical transmembrane segment spans residues 26-46 (PLFLIFLSFYLATMLGNTGMI). At 47-54 (LLIRGDRR) the chain is on the cytoplasmic side. Residues 55-75 (LHTPMYFFLSHLSLVDICYSS) traverse the membrane as a helical segment. The Extracellular portion of the chain corresponds to 76-99 (AIIPQMLAVLWEHGTTISQARCAA). A disulfide bridge links Cys-97 with Cys-189. Residues 100 to 120 (QFFLFTFFASIDCYLLAIMAY) form a helical membrane-spanning segment. Topologically, residues 121 to 139 (DRYTAVCQPLLYVTIITEK) are cytoplasmic. The chain crosses the membrane as a helical span at residues 140–160 (ARWGLVTGAYVAGFFSAFVRT). The Extracellular portion of the chain corresponds to 161 to 197 (VTAFTLSFCGNNEINFIFCDLPPLLKLSCGDSYTQEV). The chain crosses the membrane as a helical span at residues 198-217 (VIIVFALFVMPACILVILVS). Topologically, residues 218–237 (YLFIIVAILQIHSAGGRAKT) are cytoplasmic. Residues 238–258 (FSTCASHLTAVALFFGTLIFM) traverse the membrane as a helical segment. Residues 259–271 (YLRDNTGQSSEGD) are Extracellular-facing. Residues 272 to 292 (RVVSVLYTVVTPMLNPLIYSL) traverse the membrane as a helical segment. The Cytoplasmic portion of the chain corresponds to 293–314 (RNKEVKEATRKALSKSKPARRP).

The protein belongs to the G-protein coupled receptor 1 family.

The protein resides in the cell membrane. In terms of biological role, odorant receptor. The chain is Olfactory receptor 9Q2 (OR9Q2) from Homo sapiens (Human).